A 256-amino-acid polypeptide reads, in one-letter code: 5-keto-4-deoxy-D-glucarate aldolase (256 aa).

His50 acts as the Proton acceptor in catalysis. Substrate is bound at residue Gln151. Glu153 is a binding site for Mg(2+). Residues Ser178 and Asp179 each coordinate substrate. Residue Asp179 coordinates Mg(2+).

It belongs to the HpcH/HpaI aldolase family. KDGluc aldolase subfamily. In terms of assembly, homohexamer; trimer of dimers. It depends on Mg(2+) as a cofactor.

The catalysed reaction is 5-dehydro-4-deoxy-D-glucarate = 2-hydroxy-3-oxopropanoate + pyruvate. The enzyme catalyses 2-dehydro-3-deoxy-D-glucarate = 2-hydroxy-3-oxopropanoate + pyruvate. It participates in carbohydrate acid metabolism; galactarate degradation; D-glycerate from galactarate: step 2/3. In terms of biological role, catalyzes the reversible retro-aldol cleavage of both 5-keto-4-deoxy-D-glucarate and 2-keto-3-deoxy-D-glucarate to pyruvate and tartronic semialdehyde. The chain is 5-keto-4-deoxy-D-glucarate aldolase from Klebsiella pneumoniae subsp. pneumoniae (strain ATCC 700721 / MGH 78578).